Consider the following 644-residue polypeptide: Cyclin-dependent kinase C-2 C (644 aa).

Residues 105–389 (FQKLEKIGQG…ASSALNSEYF (285 aa)) enclose the Protein kinase domain. Residues 111–119 (IGQGTYSSV) and Lys-134 contribute to the ATP site. Tyr-116 carries the post-translational modification Phosphotyrosine. Asp-229 serves as the catalytic Proton acceptor. Phosphothreonine is present on Thr-263. Positions 420 to 427 (RKRANLKL) match the Nuclear localization signal motif. Residues 565 to 576 (SKLSRIGERHGS) show a composition bias toward basic and acidic residues. Positions 565–591 (SKLSRIGERHGSLDGSGLDFSQREEDS) are disordered.

Belongs to the protein kinase superfamily. CMGC Ser/Thr protein kinase family. CDC2/CDKX subfamily. In terms of processing, autophosphorylated. As to expression, expressed specifically in flowers and pollen.

It is found in the nucleus. The sequence is that of Cyclin-dependent kinase C-2 C from Arabidopsis thaliana (Mouse-ear cress).